The following is a 339-amino-acid chain: Glycerol-3-phosphate dehydrogenase [NAD(P)+] (339 aa).

NADPH contacts are provided by Ser15, Tyr16, His36, and Lys110. Residues Lys110, Gly139, and Thr141 each coordinate sn-glycerol 3-phosphate. Residue Ala143 participates in NADPH binding. Sn-glycerol 3-phosphate is bound by residues Lys195, Asp248, Ser258, Arg259, and Asn260. Catalysis depends on Lys195, which acts as the Proton acceptor. Arg259 serves as a coordination point for NADPH. Positions 283 and 285 each coordinate NADPH.

Belongs to the NAD-dependent glycerol-3-phosphate dehydrogenase family.

The protein localises to the cytoplasm. It catalyses the reaction sn-glycerol 3-phosphate + NAD(+) = dihydroxyacetone phosphate + NADH + H(+). The catalysed reaction is sn-glycerol 3-phosphate + NADP(+) = dihydroxyacetone phosphate + NADPH + H(+). It participates in membrane lipid metabolism; glycerophospholipid metabolism. Functionally, catalyzes the reduction of the glycolytic intermediate dihydroxyacetone phosphate (DHAP) to sn-glycerol 3-phosphate (G3P), the key precursor for phospholipid synthesis. In Shigella boydii serotype 18 (strain CDC 3083-94 / BS512), this protein is Glycerol-3-phosphate dehydrogenase [NAD(P)+].